The sequence spans 694 residues: Nuclear cap-binding protein subunit 3 (694 aa).

The disordered stretch occupies residues 1 to 47 (MAAVRSLRVSVKSDSASDRSESDSESDSDRDAREAEPMEVEEGEVEL). The span at 15–36 (SASDRSESDSESDSDRDAREAE) shows a compositional bias: basic and acidic residues. Acidic residues predominate over residues 37-47 (PMEVEEGEVEL). The tract at residues 126 to 187 (EALHMSGVDD…LSRMPDKEEV (62 aa)) is RNA recognition motif (RRM) domain. The short motif at 155-158 (WIDD) is the WLDD motif; essential for 7-methylguanosine-containing mRNA cap binding element. 3 disordered regions span residues 183–277 (DKEE…VKPF), 336–430 (ILKT…MDYD), and 461–694 (LRNS…DSDS). The span at 189–203 (NTDSSKPSELPVQTQ) shows a compositional bias: polar residues. A compositionally biased stretch (acidic residues) spans 212–235 (DDDDDDDEEEEGEVDDDDDDDEED). Over residues 236-264 (EKARDIEDETEKKPQETRETSLSQAERDS) the composition is skewed to basic and acidic residues. Positions 368–386 (EPIEEEEEEEEDGEEDMDA) are enriched in acidic residues. The segment covering 387–404 (DDRVVEYKDRGEKERGPR) has biased composition (basic and acidic residues). Residues 477–496 (IGGGGGGGSGGAVEGRGEGG) show a composition bias toward gly residues. Basic and acidic residues-rich tracts occupy residues 501–517 (TSEKVTDVRQLLEEKRQ), 563–595 (SRREPLSDVRSRLGVAKHDNRSLFSEPPKDKKT), and 605–618 (SHKDSGSGDEDKPS). The segment covering 634–646 (DSDGVEDEDEEDD) has biased composition (acidic residues). The span at 685 to 694 (DGSNGSDSDS) shows a compositional bias: low complexity.

This sequence belongs to the NCBP3 family. Component of an alternative cap-binding complex (CBC) composed of NCBP1/CBP80 and NCBP3.

It is found in the nucleus. The protein resides in the cytoplasm. Its function is as follows. Associates with NCBP1/CBP80 to form an alternative cap-binding complex (CBC) which plays a key role in mRNA export. NCBP3 serves as adapter protein linking the capped RNAs (m7GpppG-capped RNA) to NCBP1/CBP80. Unlike the conventional CBC with NCBP2 which binds both small nuclear RNA (snRNA) and messenger (mRNA) and is involved in their export from the nucleus, the alternative CBC with NCBP3 does not bind snRNA and associates only with mRNA thereby playing a role in only mRNA export. In Danio rerio (Zebrafish), this protein is Nuclear cap-binding protein subunit 3.